Consider the following 674-residue polypeptide: Slender lobes-like protein (674 aa).

Disordered stretches follow at residues 65–137, 168–321, and 352–382; these read LEKS…NASK, NELN…TIKK, and QKSR…RVEV. Positions 73–97 are enriched in basic residues; the sequence is PKKKVQTKKHLPPVRKKDSVKRRRI. The span at 127-137 shows a compositional bias: polar residues; that stretch reads NQSNCSSNASK. Positions 216 to 228 are enriched in acidic residues; that stretch reads VDSDDEEEQDQDQ. Positions 233–245 are enriched in basic and acidic residues; that stretch reads KPAESENHSEIKK. Serine 248 is modified (phosphoserine). The segment covering 272 to 312 has biased composition (basic and acidic residues); the sequence is EDPKEAGKNEESDKDKPAENGKSDKDKQAETEMSDEDKPSE. 2 positions are modified to phosphoserine: serine 358 and serine 391. Disordered regions lie at residues 395 to 585 and 618 to 659; these read MVAE…AGYV and KYFR…NSAK. Positions 400-410 are enriched in basic residues; that stretch reads KRQKNKRKRLS. Serine 414 is subject to Phosphoserine. Basic residues predominate over residues 548 to 558; the sequence is AKQKKKGKKKQ.

This chain is Slender lobes-like protein, found in Drosophila melanogaster (Fruit fly).